We begin with the raw amino-acid sequence, 479 residues long: Ribulose bisphosphate carboxylase large chain (479 aa).

Positions 1-2 are excised as a propeptide; the sequence is MS. Positions 123 and 173 each coordinate substrate. Lys175 (proton acceptor) is an active-site residue. Substrate is bound at residue Lys177. Mg(2+)-binding residues include Lys201, Asp203, and Glu204. Lys201 bears the N6-carboxylysine mark. Residue Ser208 is modified to Phosphoserine. The Proton acceptor role is filled by His294. Residues Arg295 and His327 each contribute to the substrate site. Thr330 is subject to Phosphothreonine. Ser379 provides a ligand contact to substrate.

Belongs to the RuBisCO large chain family. Type I subfamily. In terms of assembly, heterohexadecamer of 8 large chains and 8 small chains; disulfide-linked. The disulfide link is formed within the large subunit homodimers. The cofactor is Mg(2+). Post-translationally, the disulfide bond which can form in the large chain dimeric partners within the hexadecamer appears to be associated with oxidative stress and protein turnover.

It localises to the plastid. It is found in the chloroplast. The enzyme catalyses 2 (2R)-3-phosphoglycerate + 2 H(+) = D-ribulose 1,5-bisphosphate + CO2 + H2O. It carries out the reaction D-ribulose 1,5-bisphosphate + O2 = 2-phosphoglycolate + (2R)-3-phosphoglycerate + 2 H(+). RuBisCO catalyzes two reactions: the carboxylation of D-ribulose 1,5-bisphosphate, the primary event in carbon dioxide fixation, as well as the oxidative fragmentation of the pentose substrate in the photorespiration process. Both reactions occur simultaneously and in competition at the same active site. The sequence is that of Ribulose bisphosphate carboxylase large chain from Crucihimalaya wallichii (Rock-cress).